Reading from the N-terminus, the 671-residue chain is DNA ligase (671 aa).

Residues 32–36 (DAEYD), 81–82 (SL), and Glu113 each bind NAD(+). Catalysis depends on Lys115, which acts as the N6-AMP-lysine intermediate. Residues Arg136, Glu173, Lys290, and Lys314 each coordinate NAD(+). Zn(2+) is bound by residues Cys408, Cys411, Cys426, and Cys432. Positions 593–671 (EIDSPFAGKT…EAEMMRLLGE (79 aa)) constitute a BRCT domain.

This sequence belongs to the NAD-dependent DNA ligase family. LigA subfamily. Mg(2+) serves as cofactor. Requires Mn(2+) as cofactor.

It carries out the reaction NAD(+) + (deoxyribonucleotide)n-3'-hydroxyl + 5'-phospho-(deoxyribonucleotide)m = (deoxyribonucleotide)n+m + AMP + beta-nicotinamide D-nucleotide.. Its function is as follows. DNA ligase that catalyzes the formation of phosphodiester linkages between 5'-phosphoryl and 3'-hydroxyl groups in double-stranded DNA using NAD as a coenzyme and as the energy source for the reaction. It is essential for DNA replication and repair of damaged DNA. The chain is DNA ligase from Klebsiella pneumoniae subsp. pneumoniae (strain ATCC 700721 / MGH 78578).